The sequence spans 692 residues: Threonine--tRNA ligase (692 aa).

One can recognise a TGS domain in the interval 2–59 (AEAHISITVNGEAKEVEASQTGVELFADDKNIIAVRLNGELRDLYTPLHDGDNVESVT). A catalytic region spans residues 255 to 561 (DHRKLGQEMD…LLEHYAGAFP (307 aa)). Zn(2+) contacts are provided by cysteine 360, histidine 411, and histidine 538.

The protein belongs to the class-II aminoacyl-tRNA synthetase family. Homodimer. Zn(2+) is required as a cofactor.

Its subcellular location is the cytoplasm. It carries out the reaction tRNA(Thr) + L-threonine + ATP = L-threonyl-tRNA(Thr) + AMP + diphosphate + H(+). Functionally, catalyzes the attachment of threonine to tRNA(Thr) in a two-step reaction: L-threonine is first activated by ATP to form Thr-AMP and then transferred to the acceptor end of tRNA(Thr). Also edits incorrectly charged L-seryl-tRNA(Thr). The sequence is that of Threonine--tRNA ligase from Bifidobacterium animalis subsp. lactis (strain AD011).